The following is a 265-amino-acid chain: 4-diphosphocytidyl-2-C-methyl-D-erythritol kinase (265 aa).

Lys-8 is a catalytic residue. An ATP-binding site is contributed by 95-105 (PIGAGLGGGSS). Residue Asp-135 is part of the active site.

It belongs to the GHMP kinase family. IspE subfamily.

The enzyme catalyses 4-CDP-2-C-methyl-D-erythritol + ATP = 4-CDP-2-C-methyl-D-erythritol 2-phosphate + ADP + H(+). It participates in isoprenoid biosynthesis; isopentenyl diphosphate biosynthesis via DXP pathway; isopentenyl diphosphate from 1-deoxy-D-xylulose 5-phosphate: step 3/6. In terms of biological role, catalyzes the phosphorylation of the position 2 hydroxy group of 4-diphosphocytidyl-2C-methyl-D-erythritol. The polypeptide is 4-diphosphocytidyl-2-C-methyl-D-erythritol kinase (Ureaplasma parvum serovar 3 (strain ATCC 27815 / 27 / NCTC 11736)).